Consider the following 185-residue polypeptide: Thymidine kinase (185 aa).

Residues Gly-10–Thr-17 and Asp-83–Gln-86 contribute to the ATP site. Catalysis depends on Glu-84, which acts as the Proton acceptor. Positions 140, 143, 173, and 176 each coordinate Zn(2+).

This sequence belongs to the thymidine kinase family. In terms of assembly, homotetramer.

It is found in the cytoplasm. It catalyses the reaction thymidine + ATP = dTMP + ADP + H(+). The sequence is that of Thymidine kinase from Pseudothermotoga lettingae (strain ATCC BAA-301 / DSM 14385 / NBRC 107922 / TMO) (Thermotoga lettingae).